The following is a 142-amino-acid chain: Large ribosomal subunit protein uL13 (142 aa).

The protein belongs to the universal ribosomal protein uL13 family. In terms of assembly, part of the 50S ribosomal subunit.

In terms of biological role, this protein is one of the early assembly proteins of the 50S ribosomal subunit, although it is not seen to bind rRNA by itself. It is important during the early stages of 50S assembly. The chain is Large ribosomal subunit protein uL13 from Burkholderia mallei (strain NCTC 10247).